Reading from the N-terminus, the 313-residue chain is Calcium homeostasis modulator protein 6 (313 aa).

The Cytoplasmic portion of the chain corresponds to 1–21 (MEKFKAVLDLQRKHRNALGYS). A helical membrane pass occupies residues 22–37 (LVTLLTAGGEKIFSSV). At 38-46 (VFQCPCTAT) the chain is on the extracellular side. 3 cysteine pairs are disulfide-bonded: Cys41–Cys125, Cys43–Cys154, and Cys138–Cys145. Residues 47–68 (WNLPYGLVFLLVPALALFLLGY) form a helical membrane-spanning segment. Residues 69-101 (ALSARTWRLLTGCCSRSARFSSGLRSAFVCAQL) lie on the Cytoplasmic side of the membrane. A helical membrane pass occupies residues 102–126 (SMTAAFAPLTWVAVALLEGSFYQCA). Residues 127-167 (VSGSARLAPYLCKGRDPNCNATLPQAPCNKQKVEMQEILSQ) lie on the Extracellular side of the membrane. The helical transmembrane segment at 168-190 (LKAQSQVFGWILIAAVIILLLLV) threads the bilayer. Residues 191-313 (KSVTRCFSPV…DMSMTNTHEL (123 aa)) lie on the Cytoplasmic side of the membrane.

This sequence belongs to the CALHM family. In terms of assembly, oligomerizes to form decameric and undecameric channels. In terms of processing, N-glycosylated. In terms of tissue distribution, immune cells in primary and secondary lymphoid organs.

It localises to the cell membrane. The catalysed reaction is ATP(in) = ATP(out). Its activity is regulated as follows. Inhibited by Gd(3+). Partially inhibited by divalent ions Ca(2+) and Ba(2+). Its function is as follows. Pore-forming subunit of an ATP-permeable channel. In response to pathogen-derived and proinflammatory stimuli, relocates from intracellular compartments to NK-dendritic cell and NK-macrophage immune synapses where it mediates ATP efflux and NK cell activation involved in antimicrobial and antitumor responses. May assemble to form gap junction channel-like structures with gating and ion conductance likely regulated by membrane lipids and voltage rather than by extracellular calcium levels. The chain is Calcium homeostasis modulator protein 6 from Mus musculus (Mouse).